We begin with the raw amino-acid sequence, 275 residues long: Ribosomal RNA small subunit methyltransferase A (275 aa).

Positions 15, 17, 42, 63, 88, and 111 each coordinate S-adenosyl-L-methionine.

This sequence belongs to the class I-like SAM-binding methyltransferase superfamily. rRNA adenine N(6)-methyltransferase family. RsmA subfamily.

It is found in the cytoplasm. The catalysed reaction is adenosine(1518)/adenosine(1519) in 16S rRNA + 4 S-adenosyl-L-methionine = N(6)-dimethyladenosine(1518)/N(6)-dimethyladenosine(1519) in 16S rRNA + 4 S-adenosyl-L-homocysteine + 4 H(+). Functionally, specifically dimethylates two adjacent adenosines (A1518 and A1519) in the loop of a conserved hairpin near the 3'-end of 16S rRNA in the 30S particle. May play a critical role in biogenesis of 30S subunits. This Geobacter metallireducens (strain ATCC 53774 / DSM 7210 / GS-15) protein is Ribosomal RNA small subunit methyltransferase A.